A 406-amino-acid polypeptide reads, in one-letter code: 4-hydroxy-3-methylbut-2-en-1-yl diphosphate synthase (ferredoxin) (406 aa).

Cys-315, Cys-318, Cys-349, and Glu-356 together coordinate [4Fe-4S] cluster.

It belongs to the IspG family. The cofactor is [4Fe-4S] cluster.

It catalyses the reaction (2E)-4-hydroxy-3-methylbut-2-enyl diphosphate + 2 oxidized [2Fe-2S]-[ferredoxin] + H2O = 2-C-methyl-D-erythritol 2,4-cyclic diphosphate + 2 reduced [2Fe-2S]-[ferredoxin] + H(+). Its pathway is isoprenoid biosynthesis; isopentenyl diphosphate biosynthesis via DXP pathway; isopentenyl diphosphate from 1-deoxy-D-xylulose 5-phosphate: step 5/6. Functionally, converts 2C-methyl-D-erythritol 2,4-cyclodiphosphate (ME-2,4cPP) into 1-hydroxy-2-methyl-2-(E)-butenyl 4-diphosphate. The polypeptide is 4-hydroxy-3-methylbut-2-en-1-yl diphosphate synthase (ferredoxin) (Gloeothece citriformis (strain PCC 7424) (Cyanothece sp. (strain PCC 7424))).